A 474-amino-acid chain; its full sequence is bZIP transcription factor hapX (474 aa).

The segment covering 1 to 10 (MSTSAGTPTS) has biased composition (polar residues). Residues 1-82 (MSTSAGTPTS…RKAQNRAAQR (82 aa)) are disordered. One can recognise a bZIP domain in the interval 67-108 (DTPPTKRKAQNRAAQRAFRERRAARVGELEEQIKKIEEENER). Residues 72 to 91 (KRKAQNRAAQRAFRERRAAR) form a basic motif region. Residues 95–102 (LEEQIKKI) are leucine-zipper. 3 disordered regions span residues 201–242 (QMQT…TDFT), 282–317 (EDQP…GDVL), and 429–449 (TLPN…LTNR). Positions 287–307 (DRSNQPSQLTKLPPIQNISQF) are enriched in polar residues.

This sequence belongs to the bZIP family. YAP subfamily.

It localises to the nucleus. Iron regulator crucial for the adaptation to iron starvation and iron excess, but is dispensable for virulence. SreA represses the expression of hapX and the siderophore system during iron sufficient conditions by an iron-sensing mechanism, while hapX represses sreA and activates the siderophore system during iron-limiting conditions, resulting in efficient iron uptake and inhibition of iron-consuming pathways. HapX targets include genes encoding a number of key iron-regulated factors such as the vacuolar iron importer cccA, as well as hemA, cycA and lysF involved in heme biosynthesis, respiration and lysine biosynthesis, respectively. Activation of the vacuolar iron importer cccA during high iron conditions is essential for iron detoxification. In Arthroderma benhamiae (strain ATCC MYA-4681 / CBS 112371) (Trichophyton mentagrophytes), this protein is bZIP transcription factor hapX.